Reading from the N-terminus, the 257-residue chain is tRNA (cytidine/uridine/adenosine-2'-O-)-methyltransferase TrmJ (257 aa).

S-adenosyl-L-methionine contacts are provided by residues 79–82 (TSAR), 115–117 (GRE), Ile135, and 142–144 (GSL).

It belongs to the class IV-like SAM-binding methyltransferase superfamily. RNA methyltransferase TrmH family. Homodimer.

It localises to the cytoplasm. It carries out the reaction cytidine(32) in tRNA + S-adenosyl-L-methionine = 2'-O-methylcytidine(32) in tRNA + S-adenosyl-L-homocysteine + H(+). The enzyme catalyses uridine(32) in tRNA + S-adenosyl-L-methionine = 2'-O-methyluridine(32) in tRNA + S-adenosyl-L-homocysteine + H(+). The catalysed reaction is adenosine(32) in tRNA + S-adenosyl-L-methionine = 2'-O-methyladenosine(32) in tRNA + S-adenosyl-L-homocysteine + H(+). Catalyzes the formation of 2'O-methylated cytidine (Cm32), 2'O-methylated uridine (Um32) or 2'O-methylated adenosine (Am32) at position 32 in tRNA. Confers resistance to oxidative stress. This is tRNA (cytidine/uridine/adenosine-2'-O-)-methyltransferase TrmJ from Pseudomonas aeruginosa (strain UCBPP-PA14).